The primary structure comprises 139 residues: 3-hydroxyacyl-[acyl-carrier-protein] dehydratase FabZ (139 aa).

Residue histidine 46 is part of the active site.

Belongs to the thioester dehydratase family. FabZ subfamily.

The protein resides in the cytoplasm. It catalyses the reaction a (3R)-hydroxyacyl-[ACP] = a (2E)-enoyl-[ACP] + H2O. In terms of biological role, involved in unsaturated fatty acids biosynthesis. Catalyzes the dehydration of short chain beta-hydroxyacyl-ACPs and long chain saturated and unsaturated beta-hydroxyacyl-ACPs. The protein is 3-hydroxyacyl-[acyl-carrier-protein] dehydratase FabZ of Streptococcus pyogenes serotype M3 (strain ATCC BAA-595 / MGAS315).